The sequence spans 276 residues: 2,3,4,5-tetrahydropyridine-2,6-dicarboxylate N-succinyltransferase (276 aa).

Residues Arg-104 and Asp-141 each coordinate substrate.

The protein belongs to the transferase hexapeptide repeat family. As to quaternary structure, homotrimer.

The protein localises to the cytoplasm. The enzyme catalyses (S)-2,3,4,5-tetrahydrodipicolinate + succinyl-CoA + H2O = (S)-2-succinylamino-6-oxoheptanedioate + CoA. It participates in amino-acid biosynthesis; L-lysine biosynthesis via DAP pathway; LL-2,6-diaminopimelate from (S)-tetrahydrodipicolinate (succinylase route): step 1/3. The chain is 2,3,4,5-tetrahydropyridine-2,6-dicarboxylate N-succinyltransferase from Legionella pneumophila (strain Corby).